Reading from the N-terminus, the 208-residue chain is FMN-dependent NADH:quinone oxidoreductase (208 aa).

Residues Ser10, 16–18 (SRS), and 96–99 (MYNF) each bind FMN.

This sequence belongs to the azoreductase type 1 family. Homodimer. FMN is required as a cofactor.

The catalysed reaction is 2 a quinone + NADH + H(+) = 2 a 1,4-benzosemiquinone + NAD(+). It carries out the reaction N,N-dimethyl-1,4-phenylenediamine + anthranilate + 2 NAD(+) = 2-(4-dimethylaminophenyl)diazenylbenzoate + 2 NADH + 2 H(+). Functionally, quinone reductase that provides resistance to thiol-specific stress caused by electrophilic quinones. Also exhibits azoreductase activity. Catalyzes the reductive cleavage of the azo bond in aromatic azo compounds to the corresponding amines. This Xanthobacter autotrophicus (strain ATCC BAA-1158 / Py2) protein is FMN-dependent NADH:quinone oxidoreductase.